The sequence spans 244 residues: Complement C1q subcomponent subunit A (244 aa).

Residues 1–22 form the signal peptide; it reads MEAPRGWLVISVLAISLASSVT. The segment at 28-94 is disordered; it reads APDGTHGSAG…PGPSGPMGPA (67 aa). The Collagen-like domain maps to 31–109; it reads GTHGSAGIPG…KGTKGSPGNI (79 aa). A 4-hydroxyproline mark is found at P39 and P45. K48 carries the post-translational modification 5-hydroxylysine. The O-linked (Gal...) hydroxylysine glycan is linked to K48. 4-hydroxyproline is present on residues P54 and P57. K67 carries the post-translational modification 5-hydroxylysine. O-linked (Gal...) hydroxylysine glycosylation is present at K67. Residues P73, P79, and P85 each carry the 4-hydroxyproline modification. Over residues 79 to 94 the composition is skewed to low complexity; the sequence is PGRMGYPGPSGPMGPA. K100 bears the 5-hydroxylysine mark. The O-linked (Gal...) hydroxylysine glycan is linked to K100. Residues 110–244 form the C1q domain; the sequence is KDQPRPAFSA…FSGFLIFPSA (135 aa). N146 is a glycosylation site (N-linked (GlcNAc...) asparagine). C172 and C189 are joined by a disulfide. Q198 lines the Ca(2+) pocket.

In terms of assembly, core component of the complement C1 complex, a calcium-dependent complex composed of 1 molecule of the C1Q subcomplex, 2 molecules of C1R and 2 molecules of C1S. The C1Q subcomplex is composed 18 subunits: 3 chains of C1QA, C1QB, and C1QC trimerize to form 6 collagen-like triple helices connected to six globular ligand-recognition modules (C1q domain). Interacts with CR1 (via Sushi 24 and Sushi 25 domains). Interacts (via C-terminus) with CD33; this interaction activates CD33 inhibitory motifs. Post-translationally, O-linked glycans are assumed to be the Glc-Gal disaccharides typically found as secondary modifications of hydroxylated lysines in collagen-like domains.

The protein localises to the secreted. It localises to the cell surface. With respect to regulation, the C1Q subcomplex is inhibited by sulfated molecules, such as triterpenoid sulfates, heparan sulfate, or chondroitin sulfates. In terms of biological role, core component of the complement C1 complex, a multiprotein complex that initiates the classical pathway of the complement system, a cascade of proteins that leads to phagocytosis and breakdown of pathogens and signaling that strengthens the adaptive immune system. The classical complement pathway is initiated by the C1Q subcomplex of the C1 complex, which specifically binds IgG or IgM immunoglobulins complexed with antigens, forming antigen-antibody complexes on the surface of pathogens: C1QA, together with C1QB and C1QC, specifically recognizes and binds the Fc regions of IgG or IgM via its C1q domain. Immunoglobulin-binding activates the proenzyme C1R, which cleaves C1S, initiating the proteolytic cascade of the complement system. The C1Q subcomplex is activated by a hexamer of IgG complexed with antigens, while it is activated by a pentameric IgM. The C1Q subcomplex also recognizes and binds phosphatidylserine exposed on the surface of cells undergoing programmed cell death, possibly promoting activation of the complement system. The chain is Complement C1q subcomponent subunit A (C1QA) from Bos taurus (Bovine).